Reading from the N-terminus, the 194-residue chain is uncharacterized protein (194 aa).

The N-terminal stretch at 1–24 (MRKFVAFFVIVALAALLAGCGGQG) is a signal peptide.

This is an uncharacterized protein from Archaeoglobus fulgidus (strain ATCC 49558 / DSM 4304 / JCM 9628 / NBRC 100126 / VC-16).